The primary structure comprises 320 residues: Adhesin MafA 1/4 (320 aa).

The N-terminal stretch at 1 to 18 (MRARLLIPILFSVFILSA) is a signal peptide. C19 carries N-palmitoyl cysteine lipidation. C19 carries S-diacylglycerol cysteine lipidation. The tract at residues 287–320 (NHTGNSAPSVEADNSHEGYGYSDEAVRQHRQGQP) is disordered.

Belongs to the MafA family.

It localises to the cell outer membrane. The protein is Adhesin MafA 1/4 (mafA1) of Neisseria gonorrhoeae (strain ATCC 700825 / FA 1090).